The following is a 312-amino-acid chain: Glyoxylate/hydroxypyruvate reductase A (312 aa).

Residue Arg227 is part of the active site. The active-site Proton donor is the His275.

Belongs to the D-isomer specific 2-hydroxyacid dehydrogenase family. GhrA subfamily.

It is found in the cytoplasm. It catalyses the reaction glycolate + NADP(+) = glyoxylate + NADPH + H(+). It carries out the reaction (R)-glycerate + NAD(+) = 3-hydroxypyruvate + NADH + H(+). The enzyme catalyses (R)-glycerate + NADP(+) = 3-hydroxypyruvate + NADPH + H(+). Catalyzes the NADPH-dependent reduction of glyoxylate and hydroxypyruvate into glycolate and glycerate, respectively. The protein is Glyoxylate/hydroxypyruvate reductase A of Salmonella typhi.